The sequence spans 154 residues: PTTG1IP family member 2 (154 aa).

The first 26 residues, 1–26, serve as a signal peptide directing secretion; it reads MCWLRAWGQILLPVFLSLFLIQLLIS. Residues 27 to 97 are Extracellular-facing; that stretch reads FSENGFIHSP…SIYWLNCKVD (71 aa). Residues 98–118 form a helical membrane-spanning segment; sequence MFGIMMLLLIAVLITGFVWYC. The Cytoplasmic segment spans residues 119-154; the sequence is CAYHFYLQDLNRNRVYFYGRRETVPIHDRSATVYDE.

It localises to the membrane. The polypeptide is PTTG1IP family member 2 (Homo sapiens (Human)).